The sequence spans 211 residues: Nucleoside triphosphate pyrophosphatase (211 aa).

Catalysis depends on aspartate 78, which acts as the Proton acceptor.

Belongs to the Maf family. It depends on a divalent metal cation as a cofactor.

The protein resides in the cytoplasm. It carries out the reaction a ribonucleoside 5'-triphosphate + H2O = a ribonucleoside 5'-phosphate + diphosphate + H(+). The catalysed reaction is a 2'-deoxyribonucleoside 5'-triphosphate + H2O = a 2'-deoxyribonucleoside 5'-phosphate + diphosphate + H(+). Its function is as follows. Nucleoside triphosphate pyrophosphatase. May have a dual role in cell division arrest and in preventing the incorporation of modified nucleotides into cellular nucleic acids. This is Nucleoside triphosphate pyrophosphatase from Mycolicibacterium smegmatis (strain ATCC 700084 / mc(2)155) (Mycobacterium smegmatis).